Consider the following 274-residue polypeptide: Putative homeobox protein Meis3-like 1 (274 aa).

The MEIS N-terminal domain occupies 12-65 (GGDVCSSDSFNEDNTAFAKQVRSERPFFSSNPELDNLMIQAIQVLRFHLLELEK). 2 disordered regions span residues 108-167 (DSGS…KRGI) and 228-248 (NRTG…GYTE). The segment covering 123–135 (GLASQSGDNSSDQ) has biased composition (polar residues). Residues 161–223 (RNKKRGIFPK…NARRRIVQPM (63 aa)) constitute a DNA-binding region (homeobox).

Belongs to the TALE/MEIS homeobox family.

The protein localises to the nucleus. The chain is Putative homeobox protein Meis3-like 1 (MEIS3P1) from Homo sapiens (Human).